Consider the following 190-residue polypeptide: Translation initiation factor IF-3 (190 aa).

It belongs to the IF-3 family. As to quaternary structure, monomer.

The protein resides in the cytoplasm. Its function is as follows. IF-3 binds to the 30S ribosomal subunit and shifts the equilibrium between 70S ribosomes and their 50S and 30S subunits in favor of the free subunits, thus enhancing the availability of 30S subunits on which protein synthesis initiation begins. This is Translation initiation factor IF-3 from Prochlorococcus marinus subsp. pastoris (strain CCMP1986 / NIES-2087 / MED4).